Consider the following 1034-residue polypeptide: Mediator of RNA polymerase II transcription subunit 15 (1034 aa).

7 stretches are compositionally biased toward low complexity: residues 101–123 (QRQQQQQQQQHHMQQQGSGQQQA), 138–149 (QQAQARQQAQRQ), 157–183 (QQQQQPMPQQPQPQQQQPNMMRPQLTL), 281–312 (MNQVPQQQQQVRQQQQQQQQQQQQQHKQQPQH), 413–441 (QQIPQVQQAPLQQPQVQPPQSQQAQSRRQ), 459–490 (PQPQQTPQNIQQPMMQQQSSPPPQQQQQQQQQ), and 655–675 (QSQTQEPPQIAAQQQQPQQPI). Disordered regions lie at residues 101-124 (QRQQQQQQQQHHMQQQGSGQQQAN), 138-183 (QQAQ…QLTL), 281-315 (MNQVPQQQQQVRQQQQQQQQQQQQQHKQQPQHQEP), 413-497 (QQIP…SVPR), 655-682 (QSQTQEPPQIAAQQQQPQQPISGVNNNS), 712-804 (SAIS…NPYK), and 951-1020 (ISPT…ESTD). 2 stretches are compositionally biased toward polar residues: residues 738 to 764 (NSQSGIPTSNPQSNSNASVVNSRTATP) and 772 to 802 (PMFNNKSLASGQQNSPSPKTMINSPPQQDNP). Basic and acidic residues predominate over residues 962-971 (SESKKVKFDS). Residues 998-1020 (SINSKPSIPSSAGNMPAPNESTD) are compositionally biased toward polar residues.

This sequence belongs to the Mediator complex subunit 15 family. As to quaternary structure, component of the Mediator complex.

The protein resides in the nucleus. Its function is as follows. Component of the Mediator complex, a coactivator involved in the regulated transcription of nearly all RNA polymerase II-dependent genes. Mediator functions as a bridge to convey information from gene-specific regulatory proteins to the basal RNA polymerase II transcription machinery. Mediator is recruited to promoters by direct interactions with regulatory proteins and serves as a scaffold for the assembly of a functional preinitiation complex with RNA polymerase II and the general transcription factors. Required for transcription of genes encoding galactose-metabolizing enzymes. Essential for normal growth on nonfermentable carbon sources, for sporulation and mating. The sequence is that of Mediator of RNA polymerase II transcription subunit 15 (GAL11) from Kluyveromyces lactis (strain ATCC 8585 / CBS 2359 / DSM 70799 / NBRC 1267 / NRRL Y-1140 / WM37) (Yeast).